Here is a 192-residue protein sequence, read N- to C-terminus: Orotate phosphoribosyltransferase (192 aa).

Residues R102, K103, K106, and 129-137 (EDVVTTGRS) contribute to the 5-phospho-alpha-D-ribose 1-diphosphate site. 2 residues coordinate orotate: T133 and R161.

This sequence belongs to the purine/pyrimidine phosphoribosyltransferase family. PyrE subfamily. In terms of assembly, homodimer. Requires Mg(2+) as cofactor.

The enzyme catalyses orotidine 5'-phosphate + diphosphate = orotate + 5-phospho-alpha-D-ribose 1-diphosphate. It functions in the pathway pyrimidine metabolism; UMP biosynthesis via de novo pathway; UMP from orotate: step 1/2. Functionally, catalyzes the transfer of a ribosyl phosphate group from 5-phosphoribose 1-diphosphate to orotate, leading to the formation of orotidine monophosphate (OMP). This is Orotate phosphoribosyltransferase from Prochlorococcus marinus (strain SARG / CCMP1375 / SS120).